Here is a 207-residue protein sequence, read N- to C-terminus: BTB/POZ domain-containing protein At1g01640 (207 aa).

Residues 24 to 94 (TDVLVKPGEE…LYSGNLKAPY (71 aa)) enclose the BTB domain.

In terms of assembly, interacts with CUL3A.

It participates in protein modification; protein ubiquitination. May act as a substrate-specific adapter of an E3 ubiquitin-protein ligase complex (CUL3-RBX1-BTB) which mediates the ubiquitination and subsequent proteasomal degradation of target proteins. This chain is BTB/POZ domain-containing protein At1g01640, found in Arabidopsis thaliana (Mouse-ear cress).